A 255-amino-acid chain; its full sequence is Putative glutamine amidotransferase YafJ (255 aa).

The active-site For GATase activity is the C2. In terms of domain architecture, Glutamine amidotransferase type-2 spans C2–G251.

This chain is Putative glutamine amidotransferase YafJ (yafJ), found in Escherichia coli (strain K12).